We begin with the raw amino-acid sequence, 395 residues long: Type III polyketide synthase A (395 aa).

63–70 (KLEHLCKT) is a CoA binding site. Catalysis depends on cysteine 172, which acts as the Nucleophile. 224–225 (GD) is a binding site for substrate. CoA contacts are provided by residues leucine 274, 314 to 317 (GGPA), and alanine 317.

It belongs to the thiolase-like superfamily. Chalcone/stilbene synthases family. In terms of assembly, homodimer. Interacts with 4CLL1/ACOS5 and TKPR1. As to expression, expressed in flowers and flower buds (at protein level), and, at very low levels, in roots, seedlings, leaves and stems. Mostly confined to anther tapetal cells.

It localises to the endoplasmic reticulum. It functions in the pathway secondary metabolite biosynthesis; flavonoid biosynthesis. Its function is as follows. Plant type III polyketide synthases (PKSs) that catalyzes the condensation of malonyl-CoA units with various CoA ester starter molecules to generate a diverse array of natural products including long-chain alkyl alpha-pyrones. Accepts up to C(20) chain-length fatty acyl CoAs as starter substrates, and carries out sequential condensations with malonyl-CoA to produce triketide and tetraketide alpha-pyrones, potential sporopollenin precursors. Favorite substrates for are midchain- and v-hydroxylated fatty acyl-CoAs (e.g. 12-hydroxyoctadecanoyl-CoA and 16-hydroxyhexadecanoyl-CoA). Required for pollen development and sporopollenin biosynthesis, the major constituent of exine in the outer pollen wall. In vitro, can use 4-coumaroyl-coenzyme A as substrate to produce bis-noryangonin and fatty acyl-coenzyme A as substrate to produce medium-chain alkyl pyrones. May play a role in both the synthesis of pollen fatty acids and phenolics found in exine. This chain is Type III polyketide synthase A, found in Arabidopsis thaliana (Mouse-ear cress).